Consider the following 364-residue polypeptide: MLWPALRSVLFQLDPERVHHLAHWALHRVPLAVARARRPASIPALAVRCMGLDFDGPVGLAAGFDKGDVALPGLFGLGFSHVEIGTITPRPQPGNDRPRLFRLPEHRALLNRMGFNNEGMEACARRLAALPPAARLGPVGINVGKNKVTPNEDAAADYLACIERLHPYADYLVVNISSPNTPGLRQLQERDALDRLLRACVRHLAERAPGKPLLVKLAPDLSPEALDEAVDVAIAAGAAGIVATNTTLSRAGVERHPRAAEAGGLSGAPLERLATDVVRRCYARAAGRVPIVGVGGVMDAEGAYAKIRAGATLVQAYTGLIYGGPAFVGRVNAGLARLLERDGFSTLSDAVGADHRQGGGKAAG.

FMN contacts are provided by residues 62 to 66 and T86; that span reads AGFDK. K66 contacts substrate. 111–115 is a binding site for substrate; the sequence is NRMGF. 2 residues coordinate FMN: N142 and N175. Residue N175 participates in substrate binding. S178 acts as the Nucleophile in catalysis. N180 contacts substrate. 2 residues coordinate FMN: K216 and T244. Residue 245 to 246 coordinates substrate; sequence NT. FMN contacts are provided by residues G267, G296, and 317 to 318; that span reads YT.

Belongs to the dihydroorotate dehydrogenase family. Type 2 subfamily. In terms of assembly, monomer. It depends on FMN as a cofactor.

The protein localises to the cell membrane. It carries out the reaction (S)-dihydroorotate + a quinone = orotate + a quinol. It participates in pyrimidine metabolism; UMP biosynthesis via de novo pathway; orotate from (S)-dihydroorotate (quinone route): step 1/1. In terms of biological role, catalyzes the conversion of dihydroorotate to orotate with quinone as electron acceptor. The chain is Dihydroorotate dehydrogenase (quinone) from Anaeromyxobacter dehalogenans (strain 2CP-1 / ATCC BAA-258).